A 962-amino-acid polypeptide reads, in one-letter code: Protease 3 (962 aa).

The N-terminal stretch at M1–A23 is a signal peptide. Residue H88 coordinates Zn(2+). The Proton acceptor role is filled by E91. Zn(2+) is bound by residues H92 and E169.

This sequence belongs to the peptidase M16 family. Monomer. Zn(2+) serves as cofactor.

It localises to the periplasm. It catalyses the reaction Preferential cleavage of 16-Tyr-|-Leu-17 and 25-Phe-|-Tyr-26 bonds of oxidized insulin B chain. Also acts on other substrates of Mw less than 7 kDa such as insulin and glucagon.. Its function is as follows. Endopeptidase that degrades small peptides of less than 7 kDa, such as glucagon and insulin. This is Protease 3 (ptrA) from Salmonella typhi.